Here is a 149-residue protein sequence, read N- to C-terminus: Large ribosomal subunit protein eL19 (149 aa).

The segment at 45–130 is disordered; that stretch reads VDEGAIQAKD…RDLYDKAGGG (86 aa). Over residues 58–85 the composition is skewed to basic residues; sequence NSRGRARERQKKRAYGHQKGAGSRKGKA. Residues 90-113 show a composition bias toward basic and acidic residues; that stretch reads NSKEDWESRIRAQRTKLRELRDEG.

Belongs to the eukaryotic ribosomal protein eL19 family. As to quaternary structure, part of the 50S ribosomal subunit.

Binds to the 23S rRNA. Located at the polypeptide exit tunnel on the outside of the subunit. In Haloarcula marismortui (strain ATCC 43049 / DSM 3752 / JCM 8966 / VKM B-1809) (Halobacterium marismortui), this protein is Large ribosomal subunit protein eL19.